Here is an 838-residue protein sequence, read N- to C-terminus: G-protein coupled receptor-associated sorting protein 2 (838 aa).

Disordered stretches follow at residues 1 to 122, 218 to 292, 349 to 368, and 531 to 552; these read MTGA…GARP, ASNE…SNPF, RFRH…RAQK, and LELS…PSPE. Residues 13-31 show a composition bias toward basic and acidic residues; it reads KPEKKAGEEVIAGPEREND. The segment covering 220 to 245 has biased composition (polar residues); the sequence is NESGFWSADETSTASSFWTGEETSVR. A compositionally biased stretch (basic residues) spans 255–271; sequence RSRHRAKHQTNPRSRPR. Phosphoserine occurs at positions 282 and 284. The span at 542–552 shows a compositional bias: polar residues; sequence SLLQPDQPSPE.

It belongs to the GPRASP family. As to quaternary structure, interacts with cytoplasmic tails of a variety of G-protein coupled receptors such as muscarinic acetylcholine receptor M1/CHRM1 and calcitonin receptor/CALCR. In terms of tissue distribution, expressed in the brain.

May play a role in regulation of a variety of G-protein coupled receptors. The protein is G-protein coupled receptor-associated sorting protein 2 (GPRASP2) of Homo sapiens (Human).